The chain runs to 341 residues: Farnesyl pyrophosphate synthase 2 (341 aa).

Isopentenyl diphosphate is bound by residues K46, R49, and Q85. Mg(2+) is bound by residues D92 and D96. R101 contacts dimethylallyl diphosphate. Residue R102 participates in isopentenyl diphosphate binding. K189, T190, Q228, K245, and K254 together coordinate dimethylallyl diphosphate.

It belongs to the FPP/GGPP synthase family. Requires Mg(2+) as cofactor. Mainly expressed in trichomes, roots and flowers, and, to a lower extent, in leaves and stems.

The protein resides in the cytoplasm. It is found in the nucleus. The enzyme catalyses isopentenyl diphosphate + dimethylallyl diphosphate = (2E)-geranyl diphosphate + diphosphate. It carries out the reaction isopentenyl diphosphate + (2E)-geranyl diphosphate = (2E,6E)-farnesyl diphosphate + diphosphate. The protein operates within isoprenoid biosynthesis; farnesyl diphosphate biosynthesis; farnesyl diphosphate from geranyl diphosphate and isopentenyl diphosphate: step 1/1. It functions in the pathway sesquiterpene biosynthesis. It participates in isoprenoid biosynthesis; geranyl diphosphate biosynthesis; geranyl diphosphate from dimethylallyl diphosphate and isopentenyl diphosphate: step 1/1. In terms of biological role, catalyzes the sequential condensation of isopentenyl pyrophosphate with the allylic pyrophosphates, dimethylallyl pyrophosphate, and then with the resultant geranylpyrophosphate to the ultimate product farnesyl pyrophosphate. In Cannabis sativa (Hemp), this protein is Farnesyl pyrophosphate synthase 2.